The primary structure comprises 197 residues: MGQHLSEESNKVEIDVAELQEWYKKFVVECPSGTLFMHEFKRFFGVQDNQEAADYVEHMFRAFDKNGDNTIDFLEYVAALNLVLRGKLEHKLKWTFKVYDRDGNGCIDKTELLEIVESIYNLKKVCRQGQDDRIPLLSPEQVVDRIFQLVDENGDGQLSLDEFIDGARKDKWVMKMLQMDVSPGSWINEQRRKSALF.

Gly-2 carries the N-myristoyl glycine lipid modification. EF-hand domains follow at residues 15 to 50 (DVAELQEWYKKFVVECPSGTLFMHEFKRFFGVQDNQ), 51 to 86 (EAADYVEHMFRAFDKNGDNTIDFLEYVAALNLVLRG), 87 to 122 (KLEHKLKWTFKVYDRDGNGCIDKTELLEIVESIYNL), and 138 to 173 (SPEQVVDRIFQLVDENGDGQLSLDEFIDGARKDKWV). Positions 64, 66, 68, 70, 75, 100, 102, 104, 106, 111, 151, 153, 155, 157, and 162 each coordinate Ca(2+).

In terms of tissue distribution, low expression in retina.

Its function is as follows. Stimulates guanylyl cyclase 1 (GC1) and GC2 when free calcium ions concentration is low and inhibits guanylyl cyclases when free calcium ions concentration is elevated. This Ca(2+)-sensitive regulation of guanylyl cyclase (GC) is a key event in recovery of the dark state of rod photoreceptors following light exposure. This Lithobates pipiens (Northern leopard frog) protein is Guanylyl cyclase-activating protein 2 (GUCA1B).